A 92-amino-acid polypeptide reads, in one-letter code: Small ribosomal subunit protein uS19 (92 aa).

It belongs to the universal ribosomal protein uS19 family.

In terms of biological role, protein S19 forms a complex with S13 that binds strongly to the 16S ribosomal RNA. This Shewanella putrefaciens (strain CN-32 / ATCC BAA-453) protein is Small ribosomal subunit protein uS19.